A 566-amino-acid chain; its full sequence is MMSAMKTEFLCVLLLCGAVFTSPSQETYRRLRRGARSYKVTCRDGKTQMTYRQHDSWLRPLLRGNQVEHCWCDGGRAQCHSVPVRSCSEPWCFNGGTCRQALYSSDFVCQCPEGFMGKLCEIDATATCYKDQGVAYRGTWSTAESGAECANWNSSGLAMKPYSGRRPNAIRLGLGNHNYCRNPDQDSKPWCYVFKAGKYISEFCSTPACAKVAEEDGDCYTGNGLAYRGTRSHTKSGASCLPWNSVFLTSKIYTAWKSNAPALGLGKHNHCRNPDGDAQPWCHVWKDRQLTWEYCDVPQCVTCGLRQYKRPQFRIKGGLFADITSHPWQAAIFVKNRRSPGERFLCGGILISSCWVLSAAHCFQERYPPHHLKVFLGRTYRLVPGEEEQTFEVEKYIIHKEFDDDTYDNDIALLHLKSDSLTCARESASVRTICLPDASLQLPDWTECELSGYGKHESSSPFFSERLKEAHVRLYPSSRCTSQHLFNRTVTNNMLCAGDTRSGGDHTNLHDACQGDSGGPLVCMKDNHMTLVGIISWGLGCGRKDVPGVYTKVTNYLDWIRDNTRP.

An N-terminal signal peptide occupies residues 1–21 (MMSAMKTEFLCVLLLCGAVFT). A propeptide spanning residues 22-33 (SPSQETYRRLRR) is cleaved from the precursor. Residues 34–36 (GAR) constitute a propeptide, removed by plasmin. One can recognise a Fibronectin type-I domain in the interval 40 to 82 (VTCRDGKTQMTYRQHDSWLRPLLRGNQVEHCWCDGGRAQCHSV). Disulfide bonds link Cys42–Cys72, Cys70–Cys79, Cys87–Cys98, Cys92–Cys109, Cys111–Cys120, Cys128–Cys209, Cys149–Cys191, Cys180–Cys204, Cys219–Cys300, Cys240–Cys282, Cys271–Cys295, Cys303–Cys434, Cys346–Cys362, Cys354–Cys423, Cys448–Cys523, Cys480–Cys496, and Cys513–Cys541. An important for binding to annexin A2 region spans residues 43-53 (RDGKTQMTYRQ). Residues 83-121 (PVRSCSEPWCFNGGTCRQALYSSDFVCQCPEGFMGKLCE) form the EGF-like domain. 2 consecutive Kringle domains span residues 128–209 (CYKD…TPAC) and 219–300 (CYTG…VPQC). N-linked (GlcNAc...) asparagine glycosylation is present at Asn153. Residues 315–565 (IKGGLFADIT…YLDWIRDNTR (251 aa)) enclose the Peptidase S1 domain. Residues His361 and Asp410 each act as charge relay system in the active site. Asn487 carries N-linked (GlcNAc...) asparagine glycosylation. Ser517 functions as the Charge relay system in the catalytic mechanism.

This sequence belongs to the peptidase S1 family. In terms of assembly, heterodimer of chain A and chain B held by a disulfide bond. Binds to fibrin with high affinity. This interaction leads to an increase in the catalytic efficiency of the enzyme due to an increase in affinity for plasminogen. Similarly, binding to heparin increases the activation of plasminogen. Binds to annexin A2, cytokeratin-8, fibronectin and laminin. Binds to mannose receptor and the low-density lipoprotein receptor-related protein (LRP1); these proteins are involved in TPA clearance. Binds LRP1B; binding is followed by internalization and degradation. Forms heterodimer with SERPINA5. Interacts with SERPINE1. In complex with SERPINE1, interacts with SORL1. The single chain, almost fully active enzyme, can be further processed into a two-chain fully active form by a cleavage after Arg-314 catalyzed by plasmin, tissue kallikrein or factor Xa.

It is found in the secreted. Its subcellular location is the extracellular space. The enzyme catalyses Specific cleavage of Arg-|-Val bond in plasminogen to form plasmin.. With respect to regulation, inhibited by SERPINA5. Inhibited by SERPINE1. In terms of biological role, converts the abundant, but inactive, zymogen plasminogen to plasmin by hydrolyzing a single Arg-Val bond in plasminogen. By controlling plasmin-mediated proteolysis, it plays an important role in tissue remodeling and degradation, in cell migration and many other physiopathological events. During oocyte activation, plays a role in cortical granule reaction in the zona reaction, which contributes to the block to polyspermy. This Bos taurus (Bovine) protein is Tissue-type plasminogen activator (PLAT).